The primary structure comprises 448 residues: Gametocyte surface protein P45/48 (448 aa).

Residues 1 to 27 (MMLYISAKKAQVAFILYIVLVLRIISG) form the signal peptide. In terms of domain architecture, 6-Cys 1 spans 45-182 (IGYKCNFSNE…AMVHVRVLKY (138 aa)). Intrachain disulfides connect cysteine 49/cysteine 71 and cysteine 102/cysteine 156. Residues asparagine 50, asparagine 131, asparagine 190, asparagine 204, asparagine 254, asparagine 299, and asparagine 303 are each glycosylated (N-linked (GlcNAc...) asparagine). The 6-Cys 2 domain maps to 294-426 (VIHGCNFSSN…KSAYMTVTID (133 aa)). Intrachain disulfides connect cysteine 298–cysteine 327, cysteine 344–cysteine 412, and cysteine 352–cysteine 410. Residue aspartate 426 is the site of GPI-anchor amidated aspartate attachment. A propeptide spans 427–448 (SAYYGFLAKTFIFLIVAILLYI) (removed in mature form).

Heterodimer; heterodimerizes with PF230.

The protein localises to the cell surface. Its subcellular location is the cell membrane. Its function is as follows. Gametocyte surface protein required for male fertility. In Plasmodium falciparum (isolate 3D7), this protein is Gametocyte surface protein P45/48 (PF45/48).